A 127-amino-acid chain; its full sequence is Aspartate 1-decarboxylase (127 aa).

Catalysis depends on serine 25, which acts as the Schiff-base intermediate with substrate; via pyruvic acid. At serine 25 the chain carries Pyruvic acid (Ser). Threonine 57 is a substrate binding site. Residue tyrosine 58 is the Proton donor of the active site. 73–75 (GAA) contributes to the substrate binding site.

It belongs to the PanD family. As to quaternary structure, heterooctamer of four alpha and four beta subunits. Pyruvate is required as a cofactor. In terms of processing, is synthesized initially as an inactive proenzyme, which is activated by self-cleavage at a specific serine bond to produce a beta-subunit with a hydroxyl group at its C-terminus and an alpha-subunit with a pyruvoyl group at its N-terminus.

Its subcellular location is the cytoplasm. The catalysed reaction is L-aspartate + H(+) = beta-alanine + CO2. Its pathway is cofactor biosynthesis; (R)-pantothenate biosynthesis; beta-alanine from L-aspartate: step 1/1. Its function is as follows. Catalyzes the pyruvoyl-dependent decarboxylation of aspartate to produce beta-alanine. The protein is Aspartate 1-decarboxylase of Neisseria meningitidis serogroup A / serotype 4A (strain DSM 15465 / Z2491).